The chain runs to 872 residues: MELGKSKFSWKDLQYCDKAGTQNSPLRVVAHIDQDAFYAQVESVRLGLDHSVPLAVQQWQGLIAVNYAARAANISRHETVTEAKKKCPELCTAHVKTWKAGESEAKYHENPNPNYYKTCLDPYRHESVKILNIIKKHAPVVKKASIDECFIELTSDVKRIVLEEYPYLKIPSEDSNVALPQAPVLLWPAEFGMVIEEEVVDRTKEDYERDWDDVFLFYAAKIVKEIRDDIYLQLKYTCSAGVSFNPMLSKLVSSRNKPNKQTILTKNAIQDYLVSLKITDIRMLGGKFGEEIINLLGTDSIKDVWNMSMDFLIDKLGQTNGPLVWNLCHGIDNTEITTQVQIKSMLSAKNFSQQKVKSEEDAINWFQVFASDLRSRFLELEGMRRPKTICLTVVSRFLRKSRSSQIPMNVDISTQFIVEATSKLLRQLQQEFDVYPISNLSISFQNIIEVDRNSRGIEGFLKKSNDEIYMSTSVSPSIEGRAKLLNENMRENNSFELSSEKDIKSPKRLKRGKGKGIFDMLQQTAVSKPTENSADETYTCEECEQKITLSERNEHEDYHIALSISRKERYNNLVPPSHDKPKQVKPKTYGRKTGSKHYAPLSDETNNKRAFLDAFLGNGGNLTPNWKKQTPKAISNSSDNMTQLHLDLANSTVTCSECSMEYNSTSEEDILLHSRFHSRVLGGVTVSFQCSPIYRVNYGLSSDCIYSINSESSLIDQRKAEEALSFVNNELSSEPIETIGVDKYTTFLFISDKKCVGLLLAERISSAYIVDELELNNNNSTSSAVYIKNENLRKGFVLGISRIWVSASRRKQGIASLLLDNALKKFIYGYVISPAEVAFSQPSESGKQFIISWHRSRNNGSSKSLRYAVYES.

The interval 1-591 (MELGKSKFSW…KQVKPKTYGR (591 aa)) is polymerase type-Y. Residues 29 to 285 (VAHIDQDAFY…LKITDIRMLG (257 aa)) enclose the UmuC domain. The UBZ3-type zinc finger occupies 533–567 (SADETYTCEECEQKITLSERNEHEDYHIALSISRK). Zn(2+) is bound by residues Cys-540, Cys-543, His-555, and His-559. The segment at 569-602 (RYNNLVPPSHDKPKQVKPKTYGRKTGSKHYAPLS) is disordered. Positions 583–595 (QVKPKTYGRKTGS) are enriched in basic residues. An acetyltransferase region spans residues 592–872 (KTGSKHYAPL…KSLRYAVYES (281 aa)). A CCHH-type zinc finger spans residues 653–677 (VTCSECSMEYNSTSEEDILLHSRFH).

This sequence in the C-terminal section; belongs to the acetyltransferase family. ECO subfamily. In the N-terminal section; belongs to the DNA polymerase type-Y family. Interacts with pds5.

Its subcellular location is the nucleus. Probable acetyltransferase required for the establishment of sister chromatid cohesion and couple the processes of cohesion and DNA replication to ensure that only sister chromatids become paired together. In contrast to the structural cohesins, the deposition and establishment factors are required only during S phase. The relevance of acetyltransferase function remains unclear. The sequence is that of N-acetyltransferase eso1 (eso1) from Schizosaccharomyces pombe (strain 972 / ATCC 24843) (Fission yeast).